We begin with the raw amino-acid sequence, 223 residues long: Phosphoribosylformylglycinamidine synthase subunit PurQ (223 aa).

Residues 2 to 223 (KFAVLKFPGS…MVNSWREQNV (222 aa)) form the Glutamine amidotransferase type-1 domain. Cys-85 serves as the catalytic Nucleophile. Active-site residues include His-193 and Glu-195.

Part of the FGAM synthase complex composed of 1 PurL, 1 PurQ and 2 PurS subunits.

The protein localises to the cytoplasm. It carries out the reaction N(2)-formyl-N(1)-(5-phospho-beta-D-ribosyl)glycinamide + L-glutamine + ATP + H2O = 2-formamido-N(1)-(5-O-phospho-beta-D-ribosyl)acetamidine + L-glutamate + ADP + phosphate + H(+). The enzyme catalyses L-glutamine + H2O = L-glutamate + NH4(+). Its pathway is purine metabolism; IMP biosynthesis via de novo pathway; 5-amino-1-(5-phospho-D-ribosyl)imidazole from N(2)-formyl-N(1)-(5-phospho-D-ribosyl)glycinamide: step 1/2. Functionally, part of the phosphoribosylformylglycinamidine synthase complex involved in the purines biosynthetic pathway. Catalyzes the ATP-dependent conversion of formylglycinamide ribonucleotide (FGAR) and glutamine to yield formylglycinamidine ribonucleotide (FGAM) and glutamate. The FGAM synthase complex is composed of three subunits. PurQ produces an ammonia molecule by converting glutamine to glutamate. PurL transfers the ammonia molecule to FGAR to form FGAM in an ATP-dependent manner. PurS interacts with PurQ and PurL and is thought to assist in the transfer of the ammonia molecule from PurQ to PurL. This is Phosphoribosylformylglycinamidine synthase subunit PurQ from Staphylococcus saprophyticus subsp. saprophyticus (strain ATCC 15305 / DSM 20229 / NCIMB 8711 / NCTC 7292 / S-41).